The following is a 263-amino-acid chain: Mannose-specific lectin 2 (263 aa).

Positions M1–A24 are cleaved as a signal peptide. Bulb-type lectin domains are found at residues N26–R136 and R150–S260. 2 disulfides stabilise this stretch: C54–C76 and C178–C203.

In terms of assembly, heterotetramer of 2 domain 1 and 2 domain 2 chains arranged as a dimer of domain 1/domain 2 heterodimers.

Its function is as follows. Mannose-specific lectin. Has weak agglutinating activity towards trypsin-treated erythrocytes from rabbit but not from human. In Crocus vernus (Dutch crocus), this protein is Mannose-specific lectin 2.